Reading from the N-terminus, the 156-residue chain is MSRRTVAKKRPVAPDPVYQSRLVSLLVSHLLKKGKKSIAYNIFYAAMKNIAETTSQDPLEVLRQAVLNITPKVEVKSRRVGGATLQVPLEVKADRGTALALRWLLIAARNRSGRNMVSKLSAEIIDASNNTGAAIRRREETHRMAEANKAFAHFRF.

The protein belongs to the universal ribosomal protein uS7 family. Part of the 30S ribosomal subunit.

The protein resides in the plastid. It is found in the chloroplast. Functionally, one of the primary rRNA binding proteins, it binds directly to 16S rRNA where it nucleates assembly of the head domain of the 30S subunit. The sequence is that of Small ribosomal subunit protein uS7c (rps7) from Ostreococcus tauri.